The chain runs to 315 residues: Cell division protein FtsZ (315 aa).

GTP is bound by residues 55–57, glutamate 98, arginine 102, and aspartate 146; that span reads GTG.

Belongs to the FtsZ family. In terms of assembly, homodimer. Polymerizes to form a dynamic ring structure in a strictly GTP-dependent manner. Interacts directly with several other division proteins.

The protein resides in the cytoplasm. Its function is as follows. Essential cell division protein that forms a contractile ring structure (Z ring) at the future cell division site. The regulation of the ring assembly controls the timing and the location of cell division. One of the functions of the FtsZ ring is to recruit other cell division proteins to the septum to produce a new cell wall between the dividing cells. Binds GTP and shows GTPase activity. The sequence is that of Cell division protein FtsZ from Wolbachia pipientis.